Reading from the N-terminus, the 484-residue chain is Cobyric acid synthase (484 aa).

Positions 248–435 (VLKVIVPVLP…LHGLFEGSQS (188 aa)) constitute a GATase cobBQ-type domain. Catalysis depends on cysteine 329, which acts as the Nucleophile. Residue histidine 427 is part of the active site.

It belongs to the CobB/CobQ family. CobQ subfamily.

The protein operates within cofactor biosynthesis; adenosylcobalamin biosynthesis. Catalyzes amidations at positions B, D, E, and G on adenosylcobyrinic A,C-diamide. NH(2) groups are provided by glutamine, and one molecule of ATP is hydrogenolyzed for each amidation. The polypeptide is Cobyric acid synthase (Pseudomonas putida (strain W619)).